A 402-amino-acid polypeptide reads, in one-letter code: Argininosuccinate synthase (402 aa).

ATP contacts are provided by residues 10–18 and Ala38; that span reads AYSGGVDTS. An L-citrulline-binding site is contributed by Tyr89. ATP is bound at residue Gly119. L-aspartate is bound by residues Thr121, Asn125, and Asp126. Asn125 is an L-citrulline binding site. Residues Arg129, Ser177, Ser186, Glu262, and Tyr274 each contribute to the L-citrulline site.

This sequence belongs to the argininosuccinate synthase family. Type 1 subfamily. In terms of assembly, homotetramer.

The protein resides in the cytoplasm. It catalyses the reaction L-citrulline + L-aspartate + ATP = 2-(N(omega)-L-arginino)succinate + AMP + diphosphate + H(+). It participates in amino-acid biosynthesis; L-arginine biosynthesis; L-arginine from L-ornithine and carbamoyl phosphate: step 2/3. In Prochlorococcus marinus (strain SARG / CCMP1375 / SS120), this protein is Argininosuccinate synthase.